We begin with the raw amino-acid sequence, 237 residues long: MVYSRPIFCLCGDILWLSLERRAFTILFYVDNSFVCSSGLCRKGGVNEHKRQLHNVFTLIPFVLLYFFYDVTTGAAMLSGVSSHILLDFMTPTGCPFFYPIYRGRYRVNWRHKGSGPREKRALTTIGILAAILLLVIYAPSPFAPTSAISQWKGSGSGVNNTSNNGTDINVNFNFRGNGDTWIHPYPNGSIFIDCVGDSNSRVYRYRASSRGGQGKYLKLDSNTTENKTTKQNETGG.

The interval 213-237 (GQGKYLKLDSNTTENKTTKQNETGG) is disordered. The span at 223–237 (NTTENKTTKQNETGG) shows a compositional bias: low complexity.

This is an uncharacterized protein from Methanothermobacter thermautotrophicus (Methanobacterium thermoformicicum).